A 298-amino-acid polypeptide reads, in one-letter code: ATP phosphoribosyltransferase (298 aa).

Belongs to the ATP phosphoribosyltransferase family. Long subfamily. It depends on Mg(2+) as a cofactor.

It is found in the cytoplasm. It catalyses the reaction 1-(5-phospho-beta-D-ribosyl)-ATP + diphosphate = 5-phospho-alpha-D-ribose 1-diphosphate + ATP. The protein operates within amino-acid biosynthesis; L-histidine biosynthesis; L-histidine from 5-phospho-alpha-D-ribose 1-diphosphate: step 1/9. Its activity is regulated as follows. Feedback inhibited by histidine. Catalyzes the condensation of ATP and 5-phosphoribose 1-diphosphate to form N'-(5'-phosphoribosyl)-ATP (PR-ATP). Has a crucial role in the pathway because the rate of histidine biosynthesis seems to be controlled primarily by regulation of HisG enzymatic activity. This is ATP phosphoribosyltransferase from Psychromonas ingrahamii (strain DSM 17664 / CCUG 51855 / 37).